The sequence spans 739 residues: Phosphoribosylformylglycinamidine synthase subunit PurL (739 aa).

The active site involves H49. 2 residues coordinate ATP: Y52 and K91. Residue E93 coordinates Mg(2+). Substrate contacts are provided by residues 94 to 97 (SHNH) and R116. The active-site Proton acceptor is H95. A Mg(2+)-binding site is contributed by D117. Q240 contributes to the substrate binding site. Position 268 (D268) interacts with Mg(2+). 312-314 (ESQ) is a binding site for substrate. Positions 493 and 530 each coordinate ATP. N531 contributes to the Mg(2+) binding site. S533 contacts substrate.

The protein belongs to the FGAMS family. Monomer. Part of the FGAM synthase complex composed of 1 PurL, 1 PurQ and 2 PurS subunits.

Its subcellular location is the cytoplasm. The catalysed reaction is N(2)-formyl-N(1)-(5-phospho-beta-D-ribosyl)glycinamide + L-glutamine + ATP + H2O = 2-formamido-N(1)-(5-O-phospho-beta-D-ribosyl)acetamidine + L-glutamate + ADP + phosphate + H(+). Its pathway is purine metabolism; IMP biosynthesis via de novo pathway; 5-amino-1-(5-phospho-D-ribosyl)imidazole from N(2)-formyl-N(1)-(5-phospho-D-ribosyl)glycinamide: step 1/2. Functionally, part of the phosphoribosylformylglycinamidine synthase complex involved in the purines biosynthetic pathway. Catalyzes the ATP-dependent conversion of formylglycinamide ribonucleotide (FGAR) and glutamine to yield formylglycinamidine ribonucleotide (FGAM) and glutamate. The FGAM synthase complex is composed of three subunits. PurQ produces an ammonia molecule by converting glutamine to glutamate. PurL transfers the ammonia molecule to FGAR to form FGAM in an ATP-dependent manner. PurS interacts with PurQ and PurL and is thought to assist in the transfer of the ammonia molecule from PurQ to PurL. The protein is Phosphoribosylformylglycinamidine synthase subunit PurL of Parvibaculum lavamentivorans (strain DS-1 / DSM 13023 / NCIMB 13966).